A 554-amino-acid chain; its full sequence is Formate--tetrahydrofolate ligase (554 aa).

Residue 65–72 participates in ATP binding; sequence TPLGEGKT.

It belongs to the formate--tetrahydrofolate ligase family.

The enzyme catalyses (6S)-5,6,7,8-tetrahydrofolate + formate + ATP = (6R)-10-formyltetrahydrofolate + ADP + phosphate. It functions in the pathway one-carbon metabolism; tetrahydrofolate interconversion. The polypeptide is Formate--tetrahydrofolate ligase (Aliivibrio salmonicida (strain LFI1238) (Vibrio salmonicida (strain LFI1238))).